A 415-amino-acid polypeptide reads, in one-letter code: Casein kinase I isoform delta (415 aa).

The 269-residue stretch at 9–277 folds into the Protein kinase domain; that stretch reads YRLGRKIGSG…YLRQLFRNLF (269 aa). ATP contacts are provided by residues 15–23 and Lys38; that span reads IGSGSFGDI. Asp128 (proton acceptor) is an active-site residue. Residues 301-315 show a composition bias toward basic and acidic residues; the sequence is AEDAERERREREERL. The tract at residues 301-415 is disordered; sequence AEDAERERRE…SSGLPSTVHR (115 aa). Residues 317-342 are autoinhibitory; the sequence is HTRNPAVRGLPSTASGRLRGTQEVTP. A compositionally biased stretch (low complexity) spans 341–352; it reads TPSTPLTPTSHT. The span at 380–415 shows a compositional bias: polar residues; that stretch reads NVSSSDLTSRQDTSRMSTSQIPSRVTSSGLPSTVHR.

It belongs to the protein kinase superfamily. In terms of assembly, monomer. Interacts with per1 and per2. Component of the circadian core oscillator. Post-translationally, autophosphorylated on serine and threonine residues. In terms of tissue distribution, detected in retina photoreceptor cells.

It localises to the cytoplasm. It is found in the nucleus. It catalyses the reaction L-seryl-[protein] + ATP = O-phospho-L-seryl-[protein] + ADP + H(+). It carries out the reaction L-threonyl-[protein] + ATP = O-phospho-L-threonyl-[protein] + ADP + H(+). The enzyme catalyses L-seryl-[tau protein] + ATP = O-phospho-L-seryl-[tau protein] + ADP + H(+). The catalysed reaction is L-threonyl-[tau protein] + ATP = O-phospho-L-threonyl-[tau protein] + ADP + H(+). Its activity is regulated as follows. Exhibits substrate-dependent heparin activation. Casein kinases are operationally defined by their preferential utilization of acidic proteins such as caseins as substrates. Can phosphorylate a large number of proteins. Central component of the circadian clock. May act as a negative regulator of circadian rhythmicity by phosphorylating per1 and per2, which may lead to their degradation. Participates in wnt signaling. In terms of biological role, has no kinase activity. This Xenopus laevis (African clawed frog) protein is Casein kinase I isoform delta (csnk1d).